The primary structure comprises 533 residues: Purine-cytosine permease FCY2 (533 aa).

Over 1 to 98 the chain is Cytoplasmic; it reads MLEEGNNVYE…NAASMWFSAN (98 aa). Residue lysine 16 forms a Glycyl lysine isopeptide (Lys-Gly) (interchain with G-Cter in ubiquitin) linkage. A Phosphoserine modification is found at serine 18. Residues 99 to 119 traverse the membrane as a helical segment; it reads MVIASYALGALGPMVFGLNFG. The Extracellular segment spans residues 120 to 121; that stretch reads QS. A helical membrane pass occupies residues 122-141; it reads VLVIIFFNIMGLIFVAFFSV. At 142 to 198 the chain is on the cytoplasmic side; that stretch reads FGAELGLRQMILSRYLVGNVTARIFSLINVIACVGWGIVNTSVSAQLLNMVNEGSGH. Residues 165 to 184 are surface seeking; that stretch reads IFSLINVIACVGWGIVNTSV. The chain crosses the membrane as a helical span at residues 199 to 218; sequence VCPIWAGCLIIIGGTVLVTF. Topologically, residues 219–256 are extracellular; it reads FGYSVIHAYEKWSWVPNFAVFLVIIAQLSRSGKFKGGE. A helical membrane pass occupies residues 257 to 276; it reads WVGGATTAGSVLSFGSSIFG. The Cytoplasmic segment spans residues 277–300; the sequence is FAAGWTTYAADYTVYMPKSTNKYK. Residues 301-320 traverse the membrane as a helical segment; that stretch reads IFFSLVAGLAFPLFFTMILG. Topologically, residues 321–347 are extracellular; sequence AASAMAALNDPTWKAYYDKNAMGGVIY. A helical membrane pass occupies residues 348–367; the sequence is AILVPNSLNGFGQFCCVLLA. The Cytoplasmic portion of the chain corresponds to 368 to 398; that stretch reads LSTIANNIPNMYTVALSAQALWAPLAKIPRV. The helical transmembrane segment at 399–418 threads the bilayer; it reads VWTMAGNAATLGISIPATYY. The Extracellular portion of the chain corresponds to 419–465; it reads FDGFMENFMDSIGYYLAIYIAISCSEHFFYRRSFSAYNIDDWDNWEH. Residues 466–485 traverse the membrane as a helical segment; sequence LPIGIAGTAALIVGAFGVAL. Topologically, residues 486-533 are cytoplasmic; the sequence is GMCQTYWVGEIGRLIGKYGGDIGFELGASWAFIIYNILRPLELKYFGR.

This sequence belongs to the purine-cytosine permease (2.A.39) family. In terms of processing, not N-glycosylated.

It localises to the membrane. In terms of biological role, this permease has a broad specificity towards purines, and also transport cytosine and 5-methylcytosine but neither uracil nor thymine. The protein is Purine-cytosine permease FCY2 (FCY2) of Saccharomyces cerevisiae (strain ATCC 204508 / S288c) (Baker's yeast).